We begin with the raw amino-acid sequence, 67 residues long: Large ribosomal subunit protein bL35 (67 aa).

Over residues 1–16 the composition is skewed to basic residues; it reads MPKMKTKSSAKKRFRV. The interval 1–24 is disordered; sequence MPKMKTKSSAKKRFRVRPGGTVKR.

It belongs to the bacterial ribosomal protein bL35 family.

In Verminephrobacter eiseniae (strain EF01-2), this protein is Large ribosomal subunit protein bL35.